The primary structure comprises 94 residues: Large ribosomal subunit protein bL25 (94 aa).

This sequence belongs to the bacterial ribosomal protein bL25 family. Part of the 50S ribosomal subunit; part of the 5S rRNA/L5/L18/L25 subcomplex. Contacts the 5S rRNA. Binds to the 5S rRNA independently of L5 and L18.

Functionally, this is one of the proteins that binds to the 5S RNA in the ribosome where it forms part of the central protuberance. This is Large ribosomal subunit protein bL25 from Proteus mirabilis (strain HI4320).